Consider the following 250-residue polypeptide: Probable transcriptional regulatory protein tll0175 (250 aa).

It belongs to the TACO1 family.

It localises to the cytoplasm. This is Probable transcriptional regulatory protein tll0175 from Thermosynechococcus vestitus (strain NIES-2133 / IAM M-273 / BP-1).